A 398-amino-acid chain; its full sequence is Energy-coupling factor transporter ATP-binding protein EcfA2 (398 aa).

The 236-residue stretch at 5–240 (IELKDLEYAY…KELVRRARLK (236 aa)) folds into the ABC transporter domain. 38–45 (GSNGAGKS) is a binding site for ATP.

This sequence belongs to the ABC transporter superfamily. Energy-coupling factor EcfA family. Forms a stable energy-coupling factor (ECF) transporter complex composed of 2 membrane-embedded substrate-binding proteins (S component), 2 ATP-binding proteins (A component) and 2 transmembrane proteins (T component).

Its subcellular location is the cell membrane. Its function is as follows. ATP-binding (A) component of a common energy-coupling factor (ECF) ABC-transporter complex. Unlike classic ABC transporters this ECF transporter provides the energy necessary to transport a number of different substrates. The chain is Energy-coupling factor transporter ATP-binding protein EcfA2 from Methanospirillum hungatei JF-1 (strain ATCC 27890 / DSM 864 / NBRC 100397 / JF-1).